A 379-amino-acid chain; its full sequence is Anhydro-N-acetylmuramic acid kinase (379 aa).

9–16 (GTSVDGID) is a binding site for ATP.

Belongs to the anhydro-N-acetylmuramic acid kinase family.

The catalysed reaction is 1,6-anhydro-N-acetyl-beta-muramate + ATP + H2O = N-acetyl-D-muramate 6-phosphate + ADP + H(+). It functions in the pathway amino-sugar metabolism; 1,6-anhydro-N-acetylmuramate degradation. Its pathway is cell wall biogenesis; peptidoglycan recycling. In terms of biological role, catalyzes the specific phosphorylation of 1,6-anhydro-N-acetylmuramic acid (anhMurNAc) with the simultaneous cleavage of the 1,6-anhydro ring, generating MurNAc-6-P. Is required for the utilization of anhMurNAc either imported from the medium or derived from its own cell wall murein, and thus plays a role in cell wall recycling. The protein is Anhydro-N-acetylmuramic acid kinase of Acaryochloris marina (strain MBIC 11017).